We begin with the raw amino-acid sequence, 150 residues long: Endoribonuclease YbeY (150 aa).

Zn(2+) is bound by residues histidine 115, histidine 119, and histidine 125.

The protein belongs to the endoribonuclease YbeY family. Zn(2+) is required as a cofactor.

The protein localises to the cytoplasm. In terms of biological role, single strand-specific metallo-endoribonuclease involved in late-stage 70S ribosome quality control and in maturation of the 3' terminus of the 16S rRNA. The sequence is that of Endoribonuclease YbeY from Aquifex aeolicus (strain VF5).